Here is a 171-residue protein sequence, read N- to C-terminus: Adenine phosphoribosyltransferase (171 aa).

It belongs to the purine/pyrimidine phosphoribosyltransferase family. In terms of assembly, homodimer.

Its subcellular location is the cytoplasm. The catalysed reaction is AMP + diphosphate = 5-phospho-alpha-D-ribose 1-diphosphate + adenine. It functions in the pathway purine metabolism; AMP biosynthesis via salvage pathway; AMP from adenine: step 1/1. In terms of biological role, catalyzes a salvage reaction resulting in the formation of AMP, that is energically less costly than de novo synthesis. This is Adenine phosphoribosyltransferase from Pelotomaculum thermopropionicum (strain DSM 13744 / JCM 10971 / SI).